The following is a 106-amino-acid chain: uncharacterized protein (106 aa).

Residues 54 to 106 (RSTLVATSPRRRSLVQQRRPPLREQNGGSGSSCVSSGGSASTVKTPGSRRASK) form a disordered region. Low complexity predominate over residues 84–94 (SSCVSSGGSAS).

This is an uncharacterized protein from Human adenovirus C serotype 2 (HAdV-2).